The primary structure comprises 331 residues: Putative lipoprotein YerB (331 aa).

A signal peptide spans 1–19 (MKKWMTVCALCFVFFLLVS). C20 carries N-palmitoyl cysteine lipidation. C20 carries the S-diacylglycerol cysteine lipid modification. T97 carries the post-translational modification Phosphothreonine. At S103 the chain carries Phosphoserine.

In terms of assembly, interacts with PcrA. The interaction is not essential for cell viability or repair of UV-induced lesions.

The protein localises to the cell membrane. This chain is Putative lipoprotein YerB (yerB), found in Bacillus subtilis (strain 168).